The chain runs to 429 residues: Probable M18 family aminopeptidase 2 (429 aa).

3 residues coordinate Zn(2+): His82, His156, and His401.

It belongs to the peptidase M18 family. The cofactor is Zn(2+).

The protein is Probable M18 family aminopeptidase 2 of Stutzerimonas stutzeri (strain A1501) (Pseudomonas stutzeri).